The sequence spans 49 residues: Large ribosomal subunit protein bL33 (49 aa).

Belongs to the bacterial ribosomal protein bL33 family.

The sequence is that of Large ribosomal subunit protein bL33 from Heliobacterium modesticaldum (strain ATCC 51547 / Ice1).